Consider the following 169-residue polypeptide: Ureidoglycolate lyase (169 aa).

This sequence belongs to the ureidoglycolate lyase family. In terms of assembly, homodimer. Requires Ni(2+) as cofactor.

The enzyme catalyses (S)-ureidoglycolate = urea + glyoxylate. The protein operates within nitrogen metabolism; (S)-allantoin degradation. Its function is as follows. Catalyzes the catabolism of the allantoin degradation intermediate (S)-ureidoglycolate, generating urea and glyoxylate. Involved in the utilization of allantoin as nitrogen source. The chain is Ureidoglycolate lyase from Brucella ovis (strain ATCC 25840 / 63/290 / NCTC 10512).